An 858-amino-acid chain; its full sequence is Leucine--tRNA ligase (858 aa).

A 'HIGH' region motif is present at residues 42–52; the sequence is PYPSGRLHMGH. A 'KMSKS' region motif is present at residues 618-622; that stretch reads KMSKS. Lys-621 lines the ATP pocket.

The protein belongs to the class-I aminoacyl-tRNA synthetase family.

It is found in the cytoplasm. It carries out the reaction tRNA(Leu) + L-leucine + ATP = L-leucyl-tRNA(Leu) + AMP + diphosphate. In Aliivibrio fischeri (strain MJ11) (Vibrio fischeri), this protein is Leucine--tRNA ligase.